A 599-amino-acid polypeptide reads, in one-letter code: Protein ref(2)P (599 aa).

One can recognise a PB1 domain in the interval 3–88 (EKLLKITYQG…CESNMHVQVA (86 aa)). A ZZ-type zinc finger spans residues 122-173 (HDSVQCDGCGLAPLIGFRYKCVQCSNFDLCQKCESAHKHPEHLMLRMPTNNG). Zn(2+) contacts are provided by cysteine 127, cysteine 130, cysteine 142, cysteine 145, cysteine 151, cysteine 154, histidine 160, and histidine 163. Disordered stretches follow at residues 192–225 (RRSR…HARR), 245–319 (TTAT…INLD), 357–453 (GIFA…LDPE), and 507–544 (ASAN…DDKR). The span at 199–211 (PFQEASQPAPAAE) shows a compositional bias: low complexity. Over residues 276-286 (KATESEAKPTE) the composition is skewed to basic and acidic residues. The segment covering 291–319 (NTDQSVPTTEDPVTTPRSTEPTTPVINLD) has biased composition (polar residues). Residues 375–411 (QSQSSGQSAASSASQSAVPSAAPSANQSNVPSANQSA) show a composition bias toward low complexity. 3 consecutive repeat copies span residues 386–393 (SASQSAVP), 399–406 (ANQSNVPS), and 407–413 (ANQSATP). The tract at residues 386–413 (SASQSAVPSAAPSANQSNVPSANQSATP) is 3 X 8 AA repeats of S-A-N-Q-S-X-X-P. Polar residues predominate over residues 412–423 (TPSISGSISDAQ). Residues 511–536 (TQTAQVDTVSTSTSTTSVTTNSVGTS) are compositionally biased toward low complexity. The 46-residue stretch at 550–595 (HTDERINQSIHAMMAMGFSNEGAWLTQLLESVQGNIPAALDVMHVS) folds into the UBA domain.

Interacts with aPKC and Traf6.

It localises to the nucleus. The protein resides in the cytoplasm. Its function is as follows. Required for selective autophagy activation by ubiquitinated proteins. Implicated in sigma rhabdovirus multiplication and necessary for male fertility. Involved in activating transcription of Drs. This is Protein ref(2)P (ref(2)P) from Drosophila simulans (Fruit fly).